A 179-amino-acid polypeptide reads, in one-letter code: Protein HoxT (179 aa).

The sequence is that of Protein HoxT (hoxT) from Cupriavidus necator (strain ATCC 17699 / DSM 428 / KCTC 22496 / NCIMB 10442 / H16 / Stanier 337) (Ralstonia eutropha).